Reading from the N-terminus, the 509-residue chain is GMP synthase [glutamine-hydrolyzing] (509 aa).

Residues 4–194 (KVIVLDFGGQ…LYEICGLTPD (191 aa)) enclose the Glutamine amidotransferase type-1 domain. C81 (nucleophile) is an active-site residue. Active-site residues include H168 and E170. The GMPS ATP-PPase domain occupies 195 to 384 (WTMESFAQKA…LGLPESIVWR (190 aa)). Residue 222–228 (SGGVDSS) participates in ATP binding.

As to quaternary structure, homodimer.

It catalyses the reaction XMP + L-glutamine + ATP + H2O = GMP + L-glutamate + AMP + diphosphate + 2 H(+). The protein operates within purine metabolism; GMP biosynthesis; GMP from XMP (L-Gln route): step 1/1. In terms of biological role, catalyzes the synthesis of GMP from XMP. The polypeptide is GMP synthase [glutamine-hydrolyzing] (Carboxydothermus hydrogenoformans (strain ATCC BAA-161 / DSM 6008 / Z-2901)).